The primary structure comprises 628 residues: Venom redulysin 1 (628 aa).

The N-terminal stretch at 1 to 19 (MSKLWLLLLLVAAFQAVHS) is a signal peptide. The propeptide occupies 20-368 (YPAAESDYLE…EDDVAESDEE (349 aa)). The tract at residues 290–313 (DYEEEEEEEEEEEFELEEDYEEDP) is disordered. Residues 291 to 313 (YEEEEEEEEEEEFELEEDYEEDP) are compositionally biased toward acidic residues.

This sequence belongs to the redulysin-like family. Contains 5 disulfide bonds. Expressed by the venom gland (posterior main gland) (at protein level).

It localises to the secreted. Highly abundant protein that may be responsible for the observed disruption of sensory neuron membranes, since it is homologous to proteins such as trialysin, which forms pores in lipid bilayers. Probable insecticidal toxin. The polypeptide is Venom redulysin 1 (Platymeris rhadamanthus (Red spot assassin bug)).